Here is a 225-residue protein sequence, read N- to C-terminus: Protein-L-isoaspartate O-methyltransferase (225 aa).

Ser-75 is a catalytic residue.

It belongs to the methyltransferase superfamily. L-isoaspartyl/D-aspartyl protein methyltransferase family.

The protein localises to the cytoplasm. The catalysed reaction is [protein]-L-isoaspartate + S-adenosyl-L-methionine = [protein]-L-isoaspartate alpha-methyl ester + S-adenosyl-L-homocysteine. Functionally, catalyzes the methyl esterification of L-isoaspartyl residues in peptides and proteins that result from spontaneous decomposition of normal L-aspartyl and L-asparaginyl residues. It plays a role in the repair and/or degradation of damaged proteins. The protein is Protein-L-isoaspartate O-methyltransferase of Xylella fastidiosa (strain M23).